Consider the following 402-residue polypeptide: Deoxyguanosinetriphosphate triphosphohydrolase-like protein (402 aa).

The 145-residue stretch at 73–217 folds into the HD domain; the sequence is RLTHTIEVAQ…AAIADDIAYN (145 aa).

Belongs to the dGTPase family. Type 2 subfamily.

In Brucella anthropi (strain ATCC 49188 / DSM 6882 / CCUG 24695 / JCM 21032 / LMG 3331 / NBRC 15819 / NCTC 12168 / Alc 37) (Ochrobactrum anthropi), this protein is Deoxyguanosinetriphosphate triphosphohydrolase-like protein.